We begin with the raw amino-acid sequence, 289 residues long: Probable signal peptidase I (289 aa).

At 1–53 the chain is on the cytoplasmic side; sequence MTETTDSVPEPPSDADQLQPKVSICGLDMPAEVSETAAEAAIGVSEPKKRSAL. Residues 54-74 form a helical membrane-spanning segment; it reads WEFAILAVIAIGLYYVMLTFV. Residues 75-289 lie on the Extracellular side of the membrane; that stretch reads ARPYLIPSES…VGSVNSQQGQ (215 aa). Residues S84 and K162 contribute to the active site.

The protein belongs to the peptidase S26 family.

Its subcellular location is the cell membrane. It carries out the reaction Cleavage of hydrophobic, N-terminal signal or leader sequences from secreted and periplasmic proteins.. This is Probable signal peptidase I (lepB) from Mycobacterium leprae (strain TN).